The following is a 297-amino-acid chain: 33 kDa chaperonin (297 aa).

Disulfide bonds link Cys-232–Cys-234 and Cys-266–Cys-269.

The protein belongs to the HSP33 family. Under oxidizing conditions two disulfide bonds are formed involving the reactive cysteines. Under reducing conditions zinc is bound to the reactive cysteines and the protein is inactive.

The protein resides in the cytoplasm. In terms of biological role, redox regulated molecular chaperone. Protects both thermally unfolding and oxidatively damaged proteins from irreversible aggregation. Plays an important role in the bacterial defense system toward oxidative stress. In Pseudomonas paraeruginosa (strain DSM 24068 / PA7) (Pseudomonas aeruginosa (strain PA7)), this protein is 33 kDa chaperonin.